A 141-amino-acid chain; its full sequence is Phosphoribosyl-AMP cyclohydrolase (141 aa).

Asp-91 is a Mg(2+) binding site. Cys-92 contacts Zn(2+). Mg(2+) contacts are provided by Asp-93 and Asp-95. Residues Cys-110 and Cys-117 each coordinate Zn(2+).

The protein belongs to the PRA-CH family. In terms of assembly, homodimer. Mg(2+) serves as cofactor. It depends on Zn(2+) as a cofactor.

It is found in the cytoplasm. The enzyme catalyses 1-(5-phospho-beta-D-ribosyl)-5'-AMP + H2O = 1-(5-phospho-beta-D-ribosyl)-5-[(5-phospho-beta-D-ribosylamino)methylideneamino]imidazole-4-carboxamide. It participates in amino-acid biosynthesis; L-histidine biosynthesis; L-histidine from 5-phospho-alpha-D-ribose 1-diphosphate: step 3/9. Its function is as follows. Catalyzes the hydrolysis of the adenine ring of phosphoribosyl-AMP. This chain is Phosphoribosyl-AMP cyclohydrolase, found in Brucella anthropi (strain ATCC 49188 / DSM 6882 / CCUG 24695 / JCM 21032 / LMG 3331 / NBRC 15819 / NCTC 12168 / Alc 37) (Ochrobactrum anthropi).